Consider the following 519-residue polypeptide: Circadian clock oscillator protein KaiC (519 aa).

KaiC domains are found at residues 1–246 (MSEK…VNIF) and 260–519 (VRVS…GSDS). ATP-binding residues include Gly-48, Thr-49, Gly-50, Lys-51, Thr-52, Leu-53, Lys-223, Leu-224, Arg-225, Thr-227, His-229, Thr-239, Thr-289, Gly-290, Thr-291, Gly-292, Lys-293, Thr-294, and Leu-295. Residue Thr-52 participates in Mg(2+) binding. Position 294 (Thr-294) interacts with Mg(2+). A Mg(2+)-binding site is contributed by Glu-317. Trp-330 lines the ATP pocket. Ser-430 is subject to Phosphoserine; by autocatalysis. Thr-431 bears the Phosphothreonine; by autocatalysis mark. ATP is bound by residues Arg-450, Lys-456, Met-457, Arg-458, Ser-460, His-462, and Lys-464.

It belongs to the KaiC family. Homohexamer; hexamerization is dependent on ATP-binding. The KaiABC complex composition changes during the circadian cycle to control KaiC phosphorylation. Complexes KaiC(6), KaiA(2-4):KaiC(6), KaiB(6):KaiC(6) and KaiC(6):KaiB(6):KaiA(12) are among the most important forms, many form cooperatively. KaiC interacts with SasA, activating its autokinase function and leading to RpaA activation. Requires Mg(2+) as cofactor. Phosphorylated on serine and threonine residues by autocatalysis. Has a 4 step phosphorylation cycle; the autokinase acts first on Thr-431, then Ser-430. When Ser-430 is modified KaiC switches to an autophosphatase mode, acting first on phospho-Thr-431 then phospho-Ser-430.

It catalyses the reaction L-seryl-[protein] + ATP = O-phospho-L-seryl-[protein] + ADP + H(+). The catalysed reaction is L-threonyl-[protein] + ATP = O-phospho-L-threonyl-[protein] + ADP + H(+). It carries out the reaction ATP + H2O = ADP + phosphate + H(+). Its activity is regulated as follows. The interaction with KaiA enhances its phosphorylation status, while the interaction with KaiB decreases it. Its function is as follows. Central component of the KaiABC oscillator complex, which constitutes the main circadian regulator in cyanobacteria. Complex composition changes during the circadian cycle to control KaiC phosphorylation. KaiA stimulates KaiC autophosphorylation, while KaiB sequesters KaiA, leading to KaiC autodephosphorylation. Clock output pathways impact the RpaA transcriptional regulator. KaiC enhances the autophosphorylation activity of SasA, which then transfers its phosphate group to RpaA to activate it. KaiB and KaiC together enhance the phospho-RpaA dephosphatase activity of CikA. Has a weak, temperature-independent ATPase activity; ATPase activity defines the circadian period. The phosphorylation state of KaiC modulates its ATPase activity and effects KaiB binding. The sequence is that of Circadian clock oscillator protein KaiC from Nostoc sp. (strain PCC 7120 / SAG 25.82 / UTEX 2576).